Consider the following 668-residue polypeptide: Auxilin-like clathrin uncoating factor SWA2 (668 aa).

The disordered stretch occupies residues 1–95 (MSDPFAHLLT…ANNTPPSALA (95 aa)). The interval 1–100 (MSDPFAHLLT…PSALANTDDD (100 aa)) is CB1. The segment covering 17-36 (SASASKETTPQSSNSPSITG) has biased composition (polar residues). Residues serine 52 and serine 64 each carry the phosphoserine modification. Low complexity predominate over residues 76–92 (PTNSTTKSNTANNTPPS). The UBA domain maps to 140–180 (DEVKDMEIARLMSLGLSIEEATEFYENDVTYERYLEILKSK). The tract at residues 238–302 (EANDRLNNYS…FETKIDITKR (65 aa)) is CB2. A phosphoserine mark is found at serine 264, serine 308, and serine 312. 2 disordered regions span residues 302 to 323 (RTAPDVSHSSSPTSGILIEENS) and 339 to 359 (EGNLTNSKSNEDSTLFNENSN). The CB3 stretch occupies residues 303–362 (TAPDVSHSSSPTSGILIEENSRRNEPLIEDSLLDFSEGNLTNSKSNEDSTLFNENSNTDS). Over residues 340-359 (GNLTNSKSNEDSTLFNENSN) the composition is skewed to polar residues. TPR repeat units lie at residues 374 to 407 (YNEFKAKGTSLFKNGDYINSLQEYEKSLNTLPLN), 412 to 445 (IIALSNIIASQLKIGEYSKSIENSSMALELFPSS), and 467 to 500 (PKIMIRRAESFEHLESFKKALETYQELIKKNFFD). The segment at 511–556 (QDFINPPPVKKSMPVKKKTTTTSPATKKQNLTASSSNSPISVDSTS) is disordered. A compositionally biased stretch (polar residues) spans 539–555 (QNLTASSSNSPISVDST). The 66-residue stretch at 603-668 (CNWKDVSMQD…DKFKLQNDIN (66 aa)) folds into the J domain.

In terms of assembly, interacts with the clathrin light and heavy chains CLC1 and CHC1, respectively. Binds to clathrin with its N-terminal domain containing 3 clathrin-binding (CB) motifs. Association with clathrin is transient. Binds to polyubiquitin and ubiquitinated proteins.

Its subcellular location is the cytoplasm. It localises to the endoplasmic reticulum membrane. Cofactor for the uncoating of clathrin-coated vesicles (CCVs) by Hsp70-type chaperones (SSA1/2/3 and SSB1/2). Coat disassembly is important for fusion of vesicles with target membranes and for recycling components of clathrin coats to the cytoplasm for further rounds of vesicle formation. Binds to assembled clathrin and recruits the ATP-activated chaperone to CCVs. Stimulates the ATPase activity of the clathrin-associated Hsp70-type chaperone SSA1, which then disrupts clathrin-clathrin interactions, leading to release of the clathrin coat. In addition, prevents unproductive clathrin assembly in the cell. Also required for cortical endoplasmic reticulum inheritance. This chain is Auxilin-like clathrin uncoating factor SWA2 (SWA2), found in Saccharomyces cerevisiae (strain ATCC 204508 / S288c) (Baker's yeast).